Consider the following 53-residue polypeptide: UPF0391 membrane protein ECA0470 (53 aa).

2 consecutive transmembrane segments (helical) span residues 4-24 (WGIIFLVIALIAAALGFGGLA) and 30-47 (AAKIVFVVGIILFLVSLF).

This sequence belongs to the UPF0391 family.

The protein resides in the cell membrane. This chain is UPF0391 membrane protein ECA0470, found in Pectobacterium atrosepticum (strain SCRI 1043 / ATCC BAA-672) (Erwinia carotovora subsp. atroseptica).